The primary structure comprises 318 residues: BES1/BZR1 homolog protein 2 (318 aa).

Positions 1-13 (MAAGGGGGGGGSS) are enriched in gly residues. 4 disordered regions span residues 1–34 (MAAGGGGGGGGSSSGRTPTWKERENNKKRERRRR), 84–133 (FKPP…PSPS), 166–195 (NSAPVTPPLSSPTSRGSKRKLTSEQLPNGG), and 209–231 (APSSPTRRAGHQTPPTIPECDES). Residues 16–97 (RTPTWKEREN…ASDISGTPTN (82 aa)) form a required for DNA-binding region. The span at 91–101 (ISGTPTNFSTN) shows a compositional bias: polar residues. The span at 102–133 (SSIQPSPQSSAFPSPAPSYHGSPVSSSFPSPS) shows a compositional bias: low complexity.

It belongs to the BZR/LAT61 family. Phosphorylated. Phosphorylation increases protein degradation.

This chain is BES1/BZR1 homolog protein 2 (BEH2), found in Arabidopsis thaliana (Mouse-ear cress).